Here is a 213-residue protein sequence, read N- to C-terminus: Adenylate kinase (213 aa).

Gly-10 to Thr-15 is a binding site for ATP. Residues Ser-30 to Val-59 are NMP. AMP-binding positions include Thr-31, Arg-36, Asp-57 to Val-59, Gly-86 to Arg-89, and Gln-93. Positions Gly-127–Asp-160 are LID. Residues Arg-128 and Thr-137–Phe-138 contribute to the ATP site. Positions 157 and 168 each coordinate AMP. Gln-196 is a binding site for ATP.

It belongs to the adenylate kinase family. As to quaternary structure, monomer.

The protein localises to the cytoplasm. The catalysed reaction is AMP + ATP = 2 ADP. It participates in purine metabolism; AMP biosynthesis via salvage pathway; AMP from ADP: step 1/1. Its function is as follows. Catalyzes the reversible transfer of the terminal phosphate group between ATP and AMP. Plays an important role in cellular energy homeostasis and in adenine nucleotide metabolism. This chain is Adenylate kinase, found in Streptococcus suis (strain 98HAH33).